Consider the following 405-residue polypeptide: Multidrug resistance protein MdtH (405 aa).

The next 12 membrane-spanning stretches (helical) occupy residues 13–33, 34–54, 78–95, 99–116, 139–159, 165–185, 213–233, 243–263, 277–297, 299–319, 340–360, and 365–385; these read YFLLMDNMLVVMGFYVVFPLI, SIRFVDQLGWAALLVGIALGL, MIIAGMLMRALGFVLMGI, PWLLWLSCALSALGGTLF, LLMMQDSACSVIGALLGSWLL, LVCLAGAVLFVFAAIFNAWLL, YVLTLTGYYMLSVQVMLMLPI, AAVKWMYAIEAALSLSLLYPI, LMAGLTVMLLSLFPIGLIEDL, ALFMLIGLFYIGSIIAEPARE, LGLALGGAIGYSGGGWLYDVG, and IPQLPWFMLGLIGFITLLGLY.

It belongs to the major facilitator superfamily. DHA1 family. MdtH (TC 2.A.1.2.21) subfamily.

The protein resides in the cell inner membrane. The sequence is that of Multidrug resistance protein MdtH from Sodalis glossinidius (strain morsitans).